The chain runs to 405 residues: 4-hydroxy-3-methylbut-2-en-1-yl diphosphate synthase (flavodoxin) (405 aa).

[4Fe-4S] cluster contacts are provided by cysteine 297, cysteine 300, cysteine 343, and glutamate 350.

It belongs to the IspG family. [4Fe-4S] cluster serves as cofactor.

It catalyses the reaction (2E)-4-hydroxy-3-methylbut-2-enyl diphosphate + oxidized [flavodoxin] + H2O + 2 H(+) = 2-C-methyl-D-erythritol 2,4-cyclic diphosphate + reduced [flavodoxin]. Its pathway is isoprenoid biosynthesis; isopentenyl diphosphate biosynthesis via DXP pathway; isopentenyl diphosphate from 1-deoxy-D-xylulose 5-phosphate: step 5/6. Its function is as follows. Converts 2C-methyl-D-erythritol 2,4-cyclodiphosphate (ME-2,4cPP) into 1-hydroxy-2-methyl-2-(E)-butenyl 4-diphosphate. The protein is 4-hydroxy-3-methylbut-2-en-1-yl diphosphate synthase (flavodoxin) of Francisella tularensis subsp. novicida (strain U112).